Here is a 652-residue protein sequence, read N- to C-terminus: 2',3'-cyclic-nucleotide 2'-phosphodiesterase/3'-nucleotidase (652 aa).

A signal peptide spans 1–24 (MFKRPLTLSLLASLIALTTSTAQA). Residues aspartate 36, histidine 38, aspartate 81, asparagine 121, histidine 230, histidine 262, and histidine 264 each contribute to the a divalent metal cation site. Substrate contacts are provided by residues tyrosine 445 and 549–555 (YRAYSGK).

It belongs to the 5'-nucleotidase family. Requires a divalent metal cation as cofactor.

It localises to the periplasm. It catalyses the reaction a nucleoside 2',3'-cyclic phosphate + H2O = a nucleoside 3'-phosphate + H(+). The catalysed reaction is a ribonucleoside 3'-phosphate + H2O = a ribonucleoside + phosphate. Its function is as follows. This bifunctional enzyme catalyzes two consecutive reactions during ribonucleic acid degradation. Converts a 2',3'-cyclic nucleotide to a 3'-nucleotide and then the 3'-nucleotide to the corresponding nucleoside and phosphate. This Yersinia enterocolitica protein is 2',3'-cyclic-nucleotide 2'-phosphodiesterase/3'-nucleotidase (cpdB).